The sequence spans 359 residues: Peptide chain release factor 1 (359 aa).

Gln-235 bears the N5-methylglutamine mark. The interval 283 to 309 (QKAESERSQARRSQVGSGDRSERIRTY) is disordered.

Belongs to the prokaryotic/mitochondrial release factor family. Post-translationally, methylated by PrmC. Methylation increases the termination efficiency of RF1.

It localises to the cytoplasm. In terms of biological role, peptide chain release factor 1 directs the termination of translation in response to the peptide chain termination codons UAG and UAA. The protein is Peptide chain release factor 1 of Brucella canis (strain ATCC 23365 / NCTC 10854 / RM-666).